A 1852-amino-acid polypeptide reads, in one-letter code: Dihydropyridine-sensitive L-type skeletal muscle calcium channel subunit alpha-1 (1852 aa).

Over 1-70 the chain is Cytoplasmic; sequence MESGSGGGGG…KTCINIVEWK (70 aa). One copy of the I repeat lies at 57–354; sequence NPFRKTCINI…LVLGALSGEF (298 aa). A helical transmembrane segment spans residues 71-86; it reads PFEIIILLTIFANCVA. Topologically, residues 87 to 107 are extracellular; sequence LAVFLPMPEEDTNNTNLTLES. Asn99 and Asn102 each carry an N-linked (GlcNAc...) asparagine glycan. The chain crosses the membrane as a helical span at residues 108 to 127; that stretch reads LEYIFLVIFTLECFLKIVAY. Over 128–139 the chain is Cytoplasmic; it reads GLLFHEGAYLRN. A helical membrane pass occupies residues 140 to 155; the sequence is CWNILDFVIVFMGLFT. Residues 156–176 lie on the Extracellular side of the membrane; sequence LVVDTINTIAGVPTEKGGGFD. A helical membrane pass occupies residues 177 to 195; that stretch reads MKALRAFRVLRPLRLVSGV. At 196–214 the chain is on the cytoplasmic side; that stretch reads PSLQVVMSSILKSMLPLFH. Residues 215-234 form a helical membrane-spanning segment; that stretch reads IALLVFFMVHIYAIMGLELF. The Extracellular portion of the chain corresponds to 235–326; that stretch reads KCKMHKTCYY…WINDAMGNDW (92 aa). Asn274 carries an N-linked (GlcNAc...) asparagine glycan. The helical transmembrane segment at 327 to 351 threads the bilayer; it reads PWIYFLTLILVGSFFILNLVLGALS. Over 352–447 the chain is Cytoplasmic; sequence GEFTKEREES…RKCHVWVKSK (96 aa). The binding to the beta subunit stretch occupies residues 374-391; sequence QQMDEDLEGYMEWITHAE. The II repeat unit spans residues 433–679; that stretch reads NVVLRRKCHV…VFLAIAVDNL (247 aa). The helical transmembrane segment at 448–466 threads the bilayer; that stretch reads FFNWWVLLVVLLNTLVIAM. At 467 to 481 the chain is on the extracellular side; that stretch reads EHHNQTEGLTSFQDT. Asn470 carries N-linked (GlcNAc...) asparagine glycosylation. The helical transmembrane segment at 482–501 threads the bilayer; the sequence is ANVILLACFTIEMVMKMYAF. At 502-509 the chain is on the cytoplasmic side; the sequence is GPRAYFMS. Residues 510-528 traverse the membrane as a helical segment; sequence IFNRFDCFVVTIGILEIIL. At 529–538 the chain is on the extracellular side; sequence VVSNIMTPLG. A helical transmembrane segment spans residues 539–557; that stretch reads ISVMRCIRLLRLFKLTRYW. The Cytoplasmic portion of the chain corresponds to 558-576; the sequence is TSLNNLVASLLNSVKSIAS. The chain crosses the membrane as a helical span at residues 577-596; the sequence is LLLLLFLFIVIFALLGMQVF. The Extracellular portion of the chain corresponds to 597–651; sequence GGKFNFPDRVIQRSNFDNFPQALISVFQVLTGEEWDSIMYNGIMAHGGPQSPGIL. A helical membrane pass occupies residues 652–675; that stretch reads VSIYFIILYVCGNFVLLNVFLAIA. Residues 676–815 lie on the Cytoplasmic side of the membrane; that stretch reads VDNLAEAESL…KLCHRIVNHT (140 aa). The stretch at 802–1084 is one III repeat; it reads HKFRKLCHRI…IFVGFVIVTF (283 aa). The helical transmembrane segment at 816–834 threads the bilayer; the sequence is TFTNIILLFILLSSISLAA. The Extracellular segment spans residues 835–850; the sequence is EDPIDPRSFRNKVLAY. The helical transmembrane segment at 851–870 threads the bilayer; that stretch reads ADIVFTTVFTIEIVLKMTVY. At 871 to 882 the chain is on the cytoplasmic side; it reads GAFLHTGSFCRN. A helical membrane pass occupies residues 883-901; it reads SFNILDLIVVGVSLLSMGM. The Extracellular segment spans residues 902–908; sequence ESSTISV. The helical transmembrane segment at 909–927 threads the bilayer; the sequence is VKILRVLRVLRPLRAINRA. Topologically, residues 928 to 946 are cytoplasmic; sequence KGLKHVVQCMFVAIKTIGN. A helical membrane pass occupies residues 947 to 966; that stretch reads IVLVTMLLDFMFACIGVQLF. At 967 to 1056 the chain is on the extracellular side; it reads KGKLYYCTDP…TGPLYNNRVG (90 aa). The tract at residues 1004-1093 is dihydropyridine binding; that stretch reads RMWVNSDFNF…FQKQGEQEYK (90 aa). Residues 1057–1081 traverse the membrane as a helical segment; the sequence is ISIFFIIYIIIIAFFMMNIFVGFVI. The Cytoplasmic segment spans residues 1082–1134; the sequence is VTFQKQGEQEYKDCELDKNQRQCVQYALKARPLKCYIPKNPHQYRVWYFVTSC. The IV repeat unit spans residues 1121–1405; the sequence is NPHQYRVWYF…LFVAIIMDNV (285 aa). A helical transmembrane segment spans residues 1135–1153; the sequence is YFEYLMFFLIMLNTLCLGI. Residues 1154-1168 are Extracellular-facing; the sequence is QHCNQSDHITKLSDT. N-linked (GlcNAc...) asparagine glycosylation occurs at Asn1157. The chain crosses the membrane as a helical span at residues 1169–1188; sequence LNLIFTVLFTGEMIVKLIAF. Residues 1189-1196 are Cytoplasmic-facing; the sequence is KAKGYFGD. Residues 1197-1215 traverse the membrane as a helical segment; sequence PWNVFDFIIVVGSIVDVVL. Residues 1216–1252 are Extracellular-facing; that stretch reads SEVDAALEARGGLWCLHGCAEVNPMQAIAEAENVRVS. A helical membrane pass occupies residues 1253 to 1271; sequence ITFFRLFRVLRLIKLLNRS. Residues 1272-1290 lie on the Cytoplasmic side of the membrane; that stretch reads EGIRNLLWTFIKSFQALPH. Residues 1291 to 1310 form a helical membrane-spanning segment; sequence VGLLIVMLFFIYAVIGMQMF. Topologically, residues 1311-1377 are extracellular; it reads GKVALVDGTE…GEEYTCGSSI (67 aa). A dihydropyridine binding region spans residues 1358–1424; the sequence is LCDAKSDYGP…LGPHHLDEFK (67 aa). The tract at residues 1370 to 1413 is phenylalkylamine binding; it reads EYTCGSSIAVFYFLSFYILCAFLIINLFVAIIMDNVDYLTRDWS. A helical membrane pass occupies residues 1378–1402; the sequence is AVFYFLSFYILCAFLIINLFVAIIM. Over 1403–1852 the chain is Cytoplasmic; it reads DNVDYLTRDW…TKPKENTSAV (450 aa). An EF-hand domain is found at 1418–1453; the sequence is HHLDEFKKIWAEYDPEATGRIKHLDVVTLLRRIQPP. Ca(2+) is bound by residues Asp1431, Glu1433, Thr1435, Arg1437, and Asp1442. Residues 1820 to 1852 form a disordered region; it reads NRQSGKVTKRKRRPIPVPPGTKSTKPKENTSAV.

Belongs to the calcium channel alpha-1 subunit (TC 1.A.1.11) family. In terms of assembly, multisubunit complex consisting of alpha-1, alpha-2, beta and delta subunits in a 1:1:1:1 ratio. The channel activity is directed by the pore-forming and voltage-sensitive alpha-1 subunit. In many cases, this subunit is sufficient to generate voltage-sensitive calcium channel activity. The auxiliary subunits beta and alpha-2/delta linked by a disulfide bridge regulate the channel activity. An additional gamma subunit is present only in skeletal muscle L-type channel. May be non-phosphorylated. As to expression, skeletal muscle.

It localises to the membrane. Functionally, voltage-sensitive calcium channels (VSCC) mediate the entry of calcium ions into excitable cells and are also involved in a variety of calcium-dependent processes, including muscle contraction, gene expression, cell motility, cell division and cell death. The isoform alpha-1S gives rise to L-type calcium currents. Long-lasting (L-type) calcium channels belong to the 'high-voltage activated' (HVA) group. They are blocked by dihydropyridines (DHP), phenylalkylamines, and by benzothiazepines. Calcium channels containing the alpha-1S subunit play an important role in excitation-contraction coupling in skeletal muscle. The protein is Dihydropyridine-sensitive L-type skeletal muscle calcium channel subunit alpha-1 of Cyprinus carpio (Common carp).